Reading from the N-terminus, the 523-residue chain is Alanine aminotransferase 2 (523 aa).

Residues 1 to 25 (MQRAAALVRRGCGPRTPSSWGRSQS) are disordered. Pyridoxal 5'-phosphate is bound by residues Ala187, Ser188, Tyr216, Asn271, and Ser338. Lys341 carries the N6-(pyridoxal phosphate)lysine modification. Arg350 provides a ligand contact to pyridoxal 5'-phosphate. 3 positions are modified to N6-acetyllysine: Lys415, Lys505, and Lys512.

It belongs to the class-I pyridoxal-phosphate-dependent aminotransferase family. Alanine aminotransferase subfamily. Homodimer. Pyridoxal 5'-phosphate serves as cofactor. Expressed at high levels in muscle, adipose tissue, kidney and brain and at lower levels in the liver and breast.

It carries out the reaction L-alanine + 2-oxoglutarate = pyruvate + L-glutamate. The protein operates within amino-acid degradation; L-alanine degradation via transaminase pathway; pyruvate from L-alanine: step 1/1. In terms of biological role, catalyzes the reversible transamination between alanine and 2-oxoglutarate to form pyruvate and glutamate. The sequence is that of Alanine aminotransferase 2 (GPT2) from Homo sapiens (Human).